Here is a 127-residue protein sequence, read N- to C-terminus: Fluoride-specific ion channel FluC (127 aa).

Transmembrane regions (helical) follow at residues 4–24 (LLLAVFIGGGTGSVARWFLSM), 35–55 (LGTLTANLIGAFIIGVGLAWF), 71–91 (TGFCGGLTTFSTFSAEVVFLL), and 103–123 (IAVNMLGSFAMTALAFWLFSA). The Na(+) site is built by G75 and T78.

The protein belongs to the fluoride channel Fluc/FEX (TC 1.A.43) family.

The protein localises to the cell inner membrane. It catalyses the reaction fluoride(in) = fluoride(out). Its activity is regulated as follows. Na(+) is not transported, but it plays an essential structural role and its presence is essential for fluoride channel function. Its function is as follows. Fluoride-specific ion channel. Important for reducing fluoride concentration in the cell, thus reducing its toxicity. This is Fluoride-specific ion channel FluC from Enterobacter sp. (strain 638).